The following is a 442-amino-acid chain: F-box/FBD/LRR-repeat protein At2g26030 (442 aa).

The 47-residue stretch at 3–49 folds into the F-box domain; the sequence is CDRICELPDSLLTQVLSYLPTIDSVKTSVLSKRWEFLWLRVPVLDLK. 6 LRR repeats span residues 128–160, 162–187, 188–214, 234–260, 278–309, and 324–352; these read CNTL…HLED, WYYD…VLIR, PIDF…RLTF, YLNF…DIDS, KRDI…DRYS, and QAAV…ILDF. The FBD domain maps to 358–410; that stretch reads PEQDGLTYVPQCLLSSLECVEIRELIMGEETGEKLVRYFLKNSVVLKKLILRL.

In Arabidopsis thaliana (Mouse-ear cress), this protein is F-box/FBD/LRR-repeat protein At2g26030.